Reading from the N-terminus, the 165-residue chain is Putative tyrosine-protein phosphatase AMV078 (165 aa).

Residues 2–149 (NISNINNDIY…LKFYNSYKNI (148 aa)) form the Tyrosine-protein phosphatase domain. Cysteine 94 (phosphocysteine intermediate) is an active-site residue.

This sequence belongs to the protein-tyrosine phosphatase family. Non-receptor class dual specificity subfamily.

It carries out the reaction O-phospho-L-tyrosyl-[protein] + H2O = L-tyrosyl-[protein] + phosphate. This is Putative tyrosine-protein phosphatase AMV078 from Amsacta moorei entomopoxvirus (AmEPV).